A 355-amino-acid chain; its full sequence is Nuclear hormone receptor family member nhr-127 (355 aa).

The segment at residues 10–86 is a DNA-binding region (nuclear receptor); sequence SIPCEVCKNQ…AGMKAEKIQK (77 aa). NR C4-type zinc fingers lie at residues 13–33 and 49–69; these read CEVCKNQSNGYHFEVLSCGAC and CKDGKKRCQIRYLDRHFCRYC. Residues 126 to 355 enclose the NR LBD domain; it reads NPHNASEGCS…IVQIVQNNFY (230 aa).

The protein belongs to the nuclear hormone receptor family.

Its subcellular location is the nucleus. Functionally, orphan nuclear receptor. May play a role in modulation of lifespan and immunity. The chain is Nuclear hormone receptor family member nhr-127 (nhr-127) from Caenorhabditis elegans.